Consider the following 185-residue polypeptide: Elongation factor P (185 aa).

It belongs to the elongation factor P family.

The protein resides in the cytoplasm. Its pathway is protein biosynthesis; polypeptide chain elongation. In terms of biological role, involved in peptide bond synthesis. Stimulates efficient translation and peptide-bond synthesis on native or reconstituted 70S ribosomes in vitro. Probably functions indirectly by altering the affinity of the ribosome for aminoacyl-tRNA, thus increasing their reactivity as acceptors for peptidyl transferase. The polypeptide is Elongation factor P (Bacillus licheniformis (strain ATCC 14580 / DSM 13 / JCM 2505 / CCUG 7422 / NBRC 12200 / NCIMB 9375 / NCTC 10341 / NRRL NRS-1264 / Gibson 46)).